Reading from the N-terminus, the 413-residue chain is Argininosuccinate synthase (413 aa).

ATP contacts are provided by residues 14–22 (AYSGGLDTS) and Ala41. Positions 94 and 99 each coordinate L-citrulline. Gly124 contacts ATP. The L-aspartate site is built by Thr126, Asn130, and Asp131. Asn130 provides a ligand contact to L-citrulline. Positions 134, 185, 194, 270, and 282 each coordinate L-citrulline.

It belongs to the argininosuccinate synthase family. Type 1 subfamily. Homotetramer.

The protein localises to the cytoplasm. The enzyme catalyses L-citrulline + L-aspartate + ATP = 2-(N(omega)-L-arginino)succinate + AMP + diphosphate + H(+). It participates in amino-acid biosynthesis; L-arginine biosynthesis; L-arginine from L-ornithine and carbamoyl phosphate: step 2/3. The chain is Argininosuccinate synthase from Hyphomonas neptunium (strain ATCC 15444).